The sequence spans 1240 residues: ABC transporter B family member 17 (1240 aa).

One can recognise an ABC transmembrane type-1 1 domain in the interval 35–324 (MALGLIGAVG…SLSNLKYFSE (290 aa)). The chain crosses the membrane as a helical span at residues 36-56 (ALGLIGAVGDGFITPVVVFIF). Asn70 is a glycosylation site (N-linked (GlcNAc...) asparagine). Transmembrane regions (helical) follow at residues 81-101 (VVAL…EGYC), 158-180 (LPNF…ILMW), 184-206 (IVGF…ALVS), 264-284 (GITI…TWYG), and 296-316 (GTVF…GQSL). Residues 359–595 (VEFNHVKFTY…IDGQYTSLVS (237 aa)) enclose the ABC transporter 1 domain. Position 394 to 401 (394 to 401 (GGSGSGKS)) interacts with ATP. 3 N-linked (GlcNAc...) asparagine glycosylation sites follow: Asn542, Asn609, and Asn642. Positions 672–960 (ALYGCLSAAL…AGTMTTDLAR (289 aa)) constitute an ABC transmembrane type-1 2 domain. Helical transmembrane passes span 681 to 701 (LVGV…SVFF) and 714 to 734 (IYVL…ISQH). Asn769 is a glycosylation site (N-linked (GlcNAc...) asparagine). The next 4 helical transmembrane spans lie at 793-815 (MSLL…VIAW), 817-839 (LAIV…RVLL), 896-919 (WLAG…NFWY), and 923-943 (LIAD…IFVT). Residues 995–1233 (ITFLNVDFAY…GPTGTYFSLA (239 aa)) enclose the ABC transporter 2 domain. The N-linked (GlcNAc...) asparagine glycan is linked to Asn1015. 1030 to 1037 (GTSGSGKS) provides a ligand contact to ATP.

The protein belongs to the ABC transporter superfamily. ABCB family. Multidrug resistance exporter (TC 3.A.1.201) subfamily.

The protein resides in the membrane. The sequence is that of ABC transporter B family member 17 (ABCB17) from Arabidopsis thaliana (Mouse-ear cress).